The primary structure comprises 241 residues: NAD(P)H-hydrate epimerase (241 aa).

The 211-residue stretch at 11 to 221 (AASLDKDLME…SIVEKYGLNC (211 aa)) folds into the YjeF N-terminal domain. 65–69 (NNGGD) contacts (6S)-NADPHX. 2 residues coordinate K(+): Asn66 and Asp127. (6S)-NADPHX-binding positions include 131–137 (GFSFGGP) and Asp160. Ser163 lines the K(+) pocket.

This sequence belongs to the NnrE/AIBP family. K(+) serves as cofactor.

The protein localises to the cytoplasm. Its subcellular location is the mitochondrion. The enzyme catalyses (6R)-NADHX = (6S)-NADHX. It catalyses the reaction (6R)-NADPHX = (6S)-NADPHX. Functionally, catalyzes the epimerization of the S- and R-forms of NAD(P)HX, a damaged form of NAD(P)H that is a result of enzymatic or heat-dependent hydration. This is a prerequisite for the S-specific NAD(P)H-hydrate dehydratase to allow the repair of both epimers of NAD(P)HX. In Aspergillus fumigatus (strain ATCC MYA-4609 / CBS 101355 / FGSC A1100 / Af293) (Neosartorya fumigata), this protein is NAD(P)H-hydrate epimerase.